A 123-amino-acid polypeptide reads, in one-letter code: Histone H2B (123 aa).

A disordered region spans residues 1-30 (MPPKTSGKAAKKAGKAQKNITKTDKKKKRK). Residue P2 is modified to N-methylproline; partial. K44 is subject to N6-succinyllysine. Residue S110 is glycosylated (O-linked (GlcNAc) serine). K114 and K118 each carry N6-succinyllysine. Residue K118 forms a Glycyl lysine isopeptide (Lys-Gly) (interchain with G-Cter in ubiquitin) linkage.

The protein belongs to the histone H2B family. In terms of assembly, the nucleosome is a histone octamer containing two molecules each of H2A, H2B, H3 and H4 assembled in one H3-H4 heterotetramer and two H2A-H2B heterodimers. The octamer wraps approximately 147 bp of DNA. Phosphorylated by the catalytic component of the Dbf4-dependent kinase (DDK) complex Cdc7. In terms of processing, monoubiquitination of Lys-118 by Bre1 gives a specific tag for epigenetic transcriptional activation and is also prerequisite for histone H3 'Lys-4' and 'Lys-79' methylation. Deubiquitination of Lys-118 by the SAGA complex is involved in activating transcription of a large subset of genes. Post-translationally, methylation at Pro-2 increases upon heat shock. GlcNAcylation at Ser-110 promotes monoubiquitination of Lys-118. It fluctuates in response to extracellular glucose, and associates with transcribed genes.

Its subcellular location is the nucleus. The protein localises to the chromosome. In terms of biological role, core component of nucleosome. Nucleosomes wrap and compact DNA into chromatin, limiting DNA accessibility to the cellular machineries which require DNA as a template. Histones thereby play a central role in transcription regulation, DNA repair, DNA replication and chromosomal stability. DNA accessibility is regulated via a complex set of post-translational modifications of histones, also called histone code, and nucleosome remodeling. This chain is Histone H2B (His2B), found in Drosophila erecta (Fruit fly).